The chain runs to 676 residues: Palmitoyl-CoA ligase FUM16 (676 aa).

245–256 is a binding site for AMP; it reads IMYTSGSTGLPN. An AMP-binding region spans residues 552–655; sequence KLESIYRTSQ…SGLVTPTMKL (104 aa).

This sequence belongs to the ATP-dependent AMP-binding enzyme family.

Its subcellular location is the endoplasmic reticulum. It functions in the pathway mycotoxin biosynthesis. Palmitoyl-CoA ligase; part of the gene cluster that mediates the biosynthesis of fumonisins B1 (FB1), B2 (FB2), B3 (FB3), and B4 (FB4), which are carcinogenic mycotoxins. Plays a role in the synthesis of ceramide and is involved in self-protection from fumonisin B1 toxicity. The biosynthesis starts with the FUM1-catalyzed carbon chain assembly from one molecule of acetyl-CoA, eight molecules of malonyl-CoA, and two molecules of methionine (in S-adenosyl form). The C18 polyketide chain is released from the enzyme by a nucleophilic attack of a carbanion, which is derived from R-carbon of alanine by decarboxylation, on the carbonyl carbon of polyketide acyl chain. This step is catalyzed by the pyridoxal 5'-phosphate-dependent aminoacyl transferase FUM8. The resultant 3-keto intermediate is then stereospecifically reduced to a 3-hydroxyl product by reductase FUM13. Subsequent oxidations at C-10 by the cytochrome P450 monooxygenase FUM2, C-14 and C-15 by FUM6, FUM12 or FUM15, tricarballylic esterification of the hydroxyl groups on C-14 and C-15 by acyltransferase FUM14, and C-5 hydroxylation by 2-keto-glutarate-dependent dioxygenase FUM3 furnish the biosynthesis of fumonisins. The tricarballylic moieties are most likely derived from the citric acid cycle, and their addition to the carbon backbone may involve FUM7, FUM10, FUM11 and FUM14. The sequence is that of Palmitoyl-CoA ligase FUM16 from Gibberella moniliformis (strain M3125 / FGSC 7600) (Maize ear and stalk rot fungus).